We begin with the raw amino-acid sequence, 286 residues long: Putative WUSCHEL-related homeobox 2 (286 aa).

Residues 1-25 form a disordered region; the sequence is MAPAVQQQQSGGGGGSTGAAAVGST. Positions 23 to 87 form a DNA-binding region, homeobox; WUS-type; that stretch reads GSTTRWCPTP…NHKARDRQKL (65 aa).

This sequence belongs to the WUS homeobox family.

The protein localises to the nucleus. Its function is as follows. Transcription factor which may be involved in developmental processes. The polypeptide is Putative WUSCHEL-related homeobox 2 (WOX2) (Oryza sativa subsp. japonica (Rice)).